The following is a 183-amino-acid chain: MNSFTTKQIVATGIGAAVFIILSRFAAIPTGVPNTSIETAYAFLAFMAVLFGPITAGLIGLIGHALKDAILYGSPWWSWVIVSGFVGLGIGLIANRIRLEEGGLTTKKIILFNATQAVVQAIGWIVIAPVLDILIYAEPANKVFVQGAVAATSNILTVGVIGTLLLVTYAKTRSQAGSLKREA.

The next 5 helical transmembrane spans lie at 9–29 (IVATGIGAAVFIILSRFAAIP), 42–62 (AFLAFMAVLFGPITAGLIGLI), 74–94 (SPWWSWVIVSGFVGLGIGLIA), 117–137 (AVVQAIGWIVIAPVLDILIYA), and 147–167 (GAVAATSNILTVGVIGTLLLV).

It belongs to the UPF0397 family.

Its subcellular location is the cell membrane. This chain is UPF0397 protein EAT1b_2102, found in Exiguobacterium sp. (strain ATCC BAA-1283 / AT1b).